Consider the following 357-residue polypeptide: Cyclin-Y (357 aa).

Positions 1-13 are enriched in polar residues; the sequence is MGNSSCCLRTRSS. The interval 1 to 23 is disordered; the sequence is MGNSSCCLRTRSSSGEDKSYNND. In terms of domain architecture, Cyclin N-terminal spans 186–284; sequence PDHRNIYRFV…RFLECLDFNI (99 aa).

Belongs to the cyclin family. As to quaternary structure, interacts with pct-1; the interaction is required to activate pct-1.

It is found in the cytoplasm. The protein resides in the cell projection. Its subcellular location is the dendrite. The protein localises to the axon. Functionally, in association with pct-1, regulates the trafficking of synaptic vesicle precursors in DA motor neurons by promoting anterograde trafficking to the axon and preventing dynein-dependent trafficking to the dendrite. May also regulate synaptic vesicle trafficking in DD motor neurons and in RIA interneurons. Involved in synapse formation during DD motor neuron remodeling by disassembling ventral presynaptic structures. May activate cdk-5. This Caenorhabditis elegans protein is Cyclin-Y.